Reading from the N-terminus, the 547-residue chain is Chaperonin GroEL 1 (547 aa).

Residues 30-33 (TLGP), lysine 51, 87-91 (DGTTT), glycine 415, and aspartate 496 contribute to the ATP site.

Belongs to the chaperonin (HSP60) family. Forms a cylinder of 14 subunits composed of two heptameric rings stacked back-to-back. Interacts with the co-chaperonin GroES.

It is found in the cytoplasm. The enzyme catalyses ATP + H2O + a folded polypeptide = ADP + phosphate + an unfolded polypeptide.. Functionally, together with its co-chaperonin GroES, plays an essential role in assisting protein folding. The GroEL-GroES system forms a nano-cage that allows encapsulation of the non-native substrate proteins and provides a physical environment optimized to promote and accelerate protein folding. This chain is Chaperonin GroEL 1, found in Rhodopseudomonas palustris (strain BisB5).